The primary structure comprises 776 residues: Endonuclease MutS2 (776 aa).

330–337 (GPNTGGKT) lines the ATP pocket. The Smr domain maps to 701–776 (LDLRGMRYEE…GSGATIAILK (76 aa)).

This sequence belongs to the DNA mismatch repair MutS family. MutS2 subfamily. In terms of assembly, homodimer. Binds to stalled ribosomes, contacting rRNA.

Its function is as follows. Endonuclease that is involved in the suppression of homologous recombination and thus may have a key role in the control of bacterial genetic diversity. Acts as a ribosome collision sensor, splitting the ribosome into its 2 subunits. Detects stalled/collided 70S ribosomes which it binds and splits by an ATP-hydrolysis driven conformational change. Acts upstream of the ribosome quality control system (RQC), a ribosome-associated complex that mediates the extraction of incompletely synthesized nascent chains from stalled ribosomes and their subsequent degradation. Probably generates substrates for RQC. This chain is Endonuclease MutS2, found in Lactococcus lactis subsp. cremoris (strain MG1363).